Here is a 303-residue protein sequence, read N- to C-terminus: Y-box-binding protein 1 (303 aa).

The span at 1-12 (MSSEVETQQQQP) shows a compositional bias: polar residues. Positions 1–28 (MSSEVETQQQQPDALEGKAGQEPAATVG) are disordered. In terms of domain architecture, CSD spans 39–103 (GTVKWFNVRN…GEKGAEAANV (65 aa)). Residues 43 to 48 (WFNVRN) form a C5-methylcytosine binding region. Residues 98–303 (AEAANVTGPE…TPEAEQGGAE (206 aa)) are disordered. Positions 122–132 (HYRRYPRRRGP) are enriched in basic residues. Low complexity-rich tracts occupy residues 133–143 (PRNYQQNYQNN) and 173–187 (PPYYSRRPYGRRPQY). 2 stretches are compositionally biased toward basic residues: residues 220–229 (FRPRFRRGPP) and 258–270 (RRYRRNFNYRRRR). The span at 271–284 (PENPKSQDGKETKA) shows a compositional bias: basic and acidic residues.

It belongs to the YBX1 family.

It localises to the cytoplasm. The protein resides in the nucleus. It is found in the cytoplasmic granule. The protein localises to the secreted. Its subcellular location is the extracellular exosome. It localises to the P-body. In terms of biological role, DNA- and RNA-binding protein involved in various processes, such as translational repression, RNA stabilization, mRNA splicing and transcription regulation. Binds preferentially to the 5'-[CU]CUGCG-3' RNA motif and specifically recognizes mRNA transcripts modified by C5-methylcytosine (m5C). Promotes mRNA stabilization: acts by binding to m5C-containing mRNAs and preventing mRNA decay. Plays a role in the maternal-to-zygotic transition in early embryo by binding to m5C-containing maternal mRNAs and preventing their degradation. Also promotes maternal-to-zygotic transition in oocytes and embryos by promoting translation repression; molecular mechanisms governing translation repression are unknown. Plays a key role in RNA composition of extracellular exosomes by defining the sorting of small non-coding RNAs, such as tRNAs, Y RNAs, Vault RNAs and miRNAs. Probably sorts RNAs in exosomes by recognizing and binding C5-methylcytosine (m5C)-containing RNAs. Acts as a key effector of epidermal progenitors by preventing epidermal progenitor senescence: acts by regulating the translation of a senescence-associated subset of cytokine mRNAs, possibly by binding to m5C-containing mRNAs. Also involved in pre-mRNA alternative splicing regulation: binds to splice sites in pre-mRNA and regulates splice site selection. Also able to bind DNA and regulate transcription. Binds to promoters that contain a Y-box (5'-CTGATTGGCCAA-3'). Promotes separation of DNA strands that contain mismatches or are modified by cisplatin. Has endonucleolytic activity and can introduce nicks or breaks into double-stranded DNA, suggesting a role in DNA repair. The secreted form acts as an extracellular mitogen and stimulates cell migration and proliferation. This chain is Y-box-binding protein 1, found in Xenopus laevis (African clawed frog).